The primary structure comprises 269 residues: GTP cyclohydrolase FolE2 (269 aa).

This sequence belongs to the GTP cyclohydrolase IV family.

The catalysed reaction is GTP + H2O = 7,8-dihydroneopterin 3'-triphosphate + formate + H(+). It participates in cofactor biosynthesis; 7,8-dihydroneopterin triphosphate biosynthesis; 7,8-dihydroneopterin triphosphate from GTP: step 1/1. Functionally, converts GTP to 7,8-dihydroneopterin triphosphate. This is GTP cyclohydrolase FolE2 from Burkholderia ambifaria (strain ATCC BAA-244 / DSM 16087 / CCUG 44356 / LMG 19182 / AMMD) (Burkholderia cepacia (strain AMMD)).